Consider the following 312-residue polypeptide: Protoheme IX farnesyltransferase (312 aa).

A run of 8 helical transmembrane segments spans residues 33–53 (VMLL…VSIN), 54–74 (PLYG…AGAL), 105–125 (FIFG…FVNW), 126–146 (FAAL…TIWL), 154–174 (IVIG…AATG), 181–201 (FLLF…LSLF), 243–263 (IIGF…IIFI), and 291–311 (FYLA…CFII).

This sequence belongs to the UbiA prenyltransferase family. Protoheme IX farnesyltransferase subfamily.

The protein resides in the cell inner membrane. It catalyses the reaction heme b + (2E,6E)-farnesyl diphosphate + H2O = Fe(II)-heme o + diphosphate. It participates in porphyrin-containing compound metabolism; heme O biosynthesis; heme O from protoheme: step 1/1. In terms of biological role, converts heme B (protoheme IX) to heme O by substitution of the vinyl group on carbon 2 of heme B porphyrin ring with a hydroxyethyl farnesyl side group. The chain is Protoheme IX farnesyltransferase from Bartonella henselae (strain ATCC 49882 / DSM 28221 / CCUG 30454 / Houston 1) (Rochalimaea henselae).